A 782-amino-acid polypeptide reads, in one-letter code: DnaJ homolog subfamily C member 16 (782 aa).

The first 25 residues, 1-25 (MEVRKLSISWQFLIVLVLILQILSA), serve as a signal peptide directing secretion. At 26–535 (LDFDPYKVLG…DSIFHNNWRE (510 aa)) the chain is on the cytoplasmic side. The J domain maps to 29–93 (DPYKVLGVSR…EKRSNYDQYG (65 aa)). The region spanning 119–247 (FYFDESFFHF…LRQFVESLLP (129 aa)) is the Thioredoxin domain. Residues 536 to 556 (MMPLLSLIFSALFILFGTVIV) traverse the membrane as a helical; Anchor for type IV membrane protein segment. Residues 557 to 782 (QAFSDSSDER…FYIPSWPELD (226 aa)) lie on the Extracellular side of the membrane. The tract at residues 562–593 (SSDERESSPPDKEEAQEKTGKTEPSFTKENSS) is disordered. Over residues 563 to 582 (SDERESSPPDKEEAQEKTGK) the composition is skewed to basic and acidic residues. The segment covering 583–593 (TEPSFTKENSS) has biased composition (polar residues). An N-linked (GlcNAc...) asparagine glycan is attached at N631.

Its subcellular location is the endoplasmic reticulum membrane. Functionally, plays an important role in regulating the size of autophagosomes during the formation process. The protein is DnaJ homolog subfamily C member 16 (DNAJC16) of Pongo abelii (Sumatran orangutan).